The sequence spans 160 residues: Transcription elongation factor GreA (160 aa).

Positions 11 to 38 form a coiled coil; that stretch reads YDRLMKELERLKSERPAIIQAIKEAREE.

It belongs to the GreA/GreB family.

Necessary for efficient RNA polymerase transcription elongation past template-encoded arresting sites. The arresting sites in DNA have the property of trapping a certain fraction of elongating RNA polymerases that pass through, resulting in locked ternary complexes. Cleavage of the nascent transcript by cleavage factors such as GreA or GreB allows the resumption of elongation from the new 3'terminus. GreA releases sequences of 2 to 3 nucleotides. This Nitratidesulfovibrio vulgaris (strain DSM 19637 / Miyazaki F) (Desulfovibrio vulgaris) protein is Transcription elongation factor GreA.